A 520-amino-acid chain; its full sequence is Sodium-dependent dicarboxylate transporter SdcS (520 aa).

14 helical membrane passes run 30–50, 55–75, 77–97, 104–124, 160–180, 207–227, 242–262, 298–318, 323–343, 362–382, 399–419, 428–448, 452–472, and 491–511; these read TGQL…LLFF, LPWK…WWIT, AIPI…GHIL, SEYG…AIAM, SMFV…LAII, IGYA…PLII, FAKW…ITWL, KVVQ…EFLL, VTSS…LFII, ELPW…KGIS, GVSP…LTEV, MILP…LLLM, AMAA…AIIF, and LISA…VLGI.

Belongs to the SLC13A/DASS transporter (TC 2.A.47) family. NADC subfamily.

The protein resides in the cell membrane. Its function is as follows. Mediates the transport of the dicarboxylates fumarate, malate, and succinate across the cytoplasmic membrane via a Na(+)-electrochemical gradient. The chain is Sodium-dependent dicarboxylate transporter SdcS (sdcS) from Staphylococcus aureus (strain MRSA252).